Reading from the N-terminus, the 196-residue chain is Probable calcium-binding protein CML32 (196 aa).

EF-hand domains lie at 30-65, 121-156, and 159-194; these read LNAV…LGLV, DEEE…LGLP, and GSLA…ITVW. Positions 43, 45, 47, 49, 54, 134, 136, 138, 145, 172, 174, 176, 178, and 183 each coordinate Ca(2+).

Potential calcium sensor. The protein is Probable calcium-binding protein CML32 (CML32) of Oryza sativa subsp. japonica (Rice).